We begin with the raw amino-acid sequence, 208 residues long: Histone H1t (208 aa).

Positions 1 to 12 (MSETAPAASSTL) are enriched in polar residues. A disordered region spans residues 1–39 (MSETAPAASSTLVPAPVEKPATKRRGKKPGMATARKPRG). Serine 9 bears the Phosphoserine mark. The H15 domain maps to 38–111 (RGFSVSKLIP…GASGSFKLSK (74 aa)). Arginine 56 is subject to Citrulline. The interval 93–208 (GVLVQTKGTG…TDLRKAAGRK (116 aa)) is disordered. Residues 121 to 134 (KGKKSASAKAKKLG) show a composition bias toward basic residues. Serine 141 carries the post-translational modification Phosphoserine. Residues 143-154 (KSSKTKVVKKPK) are compositionally biased toward basic residues. Threonine 156 carries the post-translational modification Phosphothreonine. Phosphoserine is present on residues serine 163, serine 178, and serine 187. The segment covering 199–208 (TDLRKAAGRK) has biased composition (basic and acidic residues).

The protein belongs to the histone H1/H5 family. Phosphorylated in early spermatids. In terms of processing, citrullination at Arg-56 (H1R54ci) by PADI4 takes place within the DNA-binding site of H1 and results in its displacement from chromatin and global chromatin decondensation, thereby promoting pluripotency and stem cell maintenance. As to expression, testis-specific. Expressed in pachytene spermatocytes during meiotic prophase I.

Its subcellular location is the nucleus. It is found in the chromosome. Functionally, testis-specific histone H1 that forms less compacted chromatin compared to other H1 histone subtypes. Formation of more relaxed chromatin may be required to promote chromatin architecture required for proper chromosome regulation during meiosis, such as homologous recombination. Histones H1 act as linkers that bind to nucleosomes and compact polynucleosomes into a higher-order chromatin configuration. In Rattus norvegicus (Rat), this protein is Histone H1t.